A 497-amino-acid chain; its full sequence is Glycerol kinase (497 aa).

Threonine 21 lines the ADP pocket. ATP-binding residues include threonine 21 and threonine 22. Threonine 21 serves as a coordination point for sn-glycerol 3-phosphate. Arginine 25 is an ADP binding site. Sn-glycerol 3-phosphate is bound by residues arginine 88, glutamate 89, tyrosine 140, and aspartate 244. Glycerol-binding residues include arginine 88, glutamate 89, tyrosine 140, aspartate 244, and glutamine 245. ADP-binding residues include threonine 266 and glycine 309. Residues threonine 266, glycine 309, glutamine 313, and glycine 410 each coordinate ATP. ADP contacts are provided by glycine 410 and asparagine 414.

This sequence belongs to the FGGY kinase family.

It catalyses the reaction glycerol + ATP = sn-glycerol 3-phosphate + ADP + H(+). It participates in polyol metabolism; glycerol degradation via glycerol kinase pathway; sn-glycerol 3-phosphate from glycerol: step 1/1. Its activity is regulated as follows. Inhibited by fructose 1,6-bisphosphate (FBP). Functionally, key enzyme in the regulation of glycerol uptake and metabolism. Catalyzes the phosphorylation of glycerol to yield sn-glycerol 3-phosphate. The chain is Glycerol kinase from Gloeobacter violaceus (strain ATCC 29082 / PCC 7421).